Here is a 218-residue protein sequence, read N- to C-terminus: Tubulin polymerization-promoting protein (218 aa).

Residues 1-45 (MADSKAKPTKAANKTPPKSPGDPAKAAKRLSLESEGANEGAAAAP) form a disordered region. The interval 2–115 (ADSKAKPTKA…SCRTITFEQF (114 aa)) is mediates interaction with LIMK1. At Thr15 the chain carries Phosphothreonine. Ser19, Ser31, and Ser34 each carry phosphoserine. Residues 33 to 45 (ESEGANEGAAAAP) are compositionally biased toward low complexity. Residues His60, His71, Cys79, and Cys82 each coordinate Zn(2+). Position 91 is a phosphothreonine (Thr91). Ser106 bears the Phosphoserine mark. Residue Ser151 is glycosylated (O-linked (GlcNAc) serine). Residues Ser158 and Ser159 each carry the phosphoserine modification. The segment at 165 to 192 (LTDTSKFTGSHKERFDQSGKGKGKAGRV) is disordered. The segment covering 174–183 (SHKERFDQSG) has biased composition (basic and acidic residues).

The protein belongs to the TPPP family. In terms of assembly, homodimer. Binds tubulin; binding is inhibited by GTP. Interacts with MAPK1. Interacts with GAPDH; the interaction is direct. Interacts with LIMK1 (via the PDZ domain); the interaction is direct. Interacts with LIMK2. Interacts with HDAC6; thereby inhibiting the tubulin deacetylase activity of HDAC6. Interacts with aggregated SNCA; may have a pro-aggregatory role in synucleinopathies. Interacts with DYNLL1. Interacts (via C-terminus) with S100A2, S100A6 and S100B; these interactions inhibit TPPP dimerization. Requires Mg(2+) as cofactor. Post-translationally, phosphorylated by LIMK1 on serine residues; phosphorylation may alter the tubulin polymerization activity. Phosphorylation by LIMK2, but not LIMK1, regulates astral microtubule organization at early stage of mitosis. Phosphorylation by ROCK1 at Ser-31, Ser-106 and Ser-158 inhibits interaction with HDAC6, resulting in decreased acetylation of tubulin, increased cell motility and entry into S-phase. Phosphorylation by CDK1 inhibits the microtubule polymerizing activity. Degraded by the proteasome; zinc-binding inhibits degradation by the proteasome. Predominantly expressed in mature oligodendrocytes.

It localises to the golgi outpost. The protein resides in the cytoplasm. Its subcellular location is the cytoskeleton. It is found in the microtubule organizing center. The protein localises to the nucleus. It localises to the spindle. The catalysed reaction is GTP + H2O = GDP + phosphate + H(+). In terms of biological role, regulator of microtubule dynamics that plays a key role in myelination by promoting elongation of the myelin sheath. Acts as a microtubule nucleation factor in oligodendrocytes: specifically localizes to the postsynaptic Golgi apparatus region, also named Golgi outpost, and promotes microtubule nucleation, an important step for elongation of the myelin sheath. Required for both uniform polarized growth of distal microtubules as well as directing the branching of proximal processes. Shows magnesium-dependent GTPase activity; the role of the GTPase activity is unclear. In addition to microtubule nucleation activity, also involved in microtubule bundling and stabilization of existing microtubules, thereby maintaining the integrity of the microtubule network. Regulates microtubule dynamics by promoting tubulin acetylation: acts by inhibiting the tubulin deacetylase activity of HDAC6. Also regulates cell migration: phosphorylation by ROCK1 inhibits interaction with HDAC6, resulting in decreased acetylation of tubulin and increased cell motility. Plays a role in cell proliferation by regulating the G1/S-phase transition. Involved in astral microtubule organization and mitotic spindle orientation during early stage of mitosis; this process is regulated by phosphorylation by LIMK2. This chain is Tubulin polymerization-promoting protein, found in Rattus norvegicus (Rat).